The primary structure comprises 151 residues: U-scoloptoxin(17)-Er2a (151 aa).

Positions 1 to 22 (MKSFFVVFAIVFQATLVALSLA) are cleaved as a signal peptide.

The protein belongs to the scoloptoxin-17 family. Post-translationally, contains 5 disulfide bonds. As to expression, expressed by the venom gland.

It is found in the secreted. This Ethmostigmus rubripes (Giant centipede) protein is U-scoloptoxin(17)-Er2a.